Consider the following 420-residue polypeptide: Reticulon-4 receptor-like 2 (420 aa).

The N-terminal stretch at 1–30 is a signal peptide; that stretch reads MLPGLRRLLQGPASACLLLTLLALPSVTPS. Disulfide bonds link cysteine 31–cysteine 37 and cysteine 35–cysteine 46. The region spanning 31–60 is the LRRNT domain; that stretch reads CPMLCTCYSSPPTVSCQANNFSSVPLSLPP. A glycan (N-linked (GlcNAc...) asparagine) is linked at asparagine 50. 8 LRR repeats span residues 61–82, 83–104, 107–129, 132–153, 156–177, 180–201, 204–225, and 228–249; these read STQR…TFGP, NLLT…TFRH, ALEE…TFQG, RLQS…IFRG, SLQY…LFAD, NLSH…VFRG, SLDR…AFHG, and RLTI…ALAD. N-linked (GlcNAc...) asparagine glycosylation is present at asparagine 93. N-linked (GlcNAc...) asparagine glycosylation is present at asparagine 236. The region spanning 261–312 is the LRRCT domain; sequence NPWACDCRARPLWAWFQRARVSSSDVTCATPPERQGRDLRALRDSDFQACPP. 2 disulfides stabilise this stretch: cysteine 265-cysteine 288 and cysteine 267-cysteine 310. The disordered stretch occupies residues 286 to 399; that stretch reads VTCATPPERQ…CQAPADSRGP (114 aa). The span at 294–306 shows a compositional bias: basic and acidic residues; it reads RQGRDLRALRDSD. The important for interaction with MAG stretch occupies residues 315–327; the sequence is PTRPGSRARGNSS. Positions 351–360 are enriched in basic and acidic residues; it reads LPAEDSRGRQ. The GPI-anchor amidated glycine moiety is linked to residue glycine 398. Positions 399-420 are cleaved as a propeptide — removed in mature form; the sequence is PALSAGLRTPLLCLLPLALHHL.

This sequence belongs to the Nogo receptor family. Interaction with MAG is controversial, and may be indirect. Interacts with MAG. Does not interact with OMG and RTN4. In terms of processing, undergoes zinc metalloproteinase-mediated ectodomain shedding in neuroblastoma cells; is released both as a full-length ectodomain and an N-terminal fragment containing the leucine-rich repeat (LRR) region of the protein. N-glycosylated. In terms of tissue distribution, detected in brain. Detected in hippocampus neurons (at protein level).

The protein resides in the cell membrane. The protein localises to the membrane raft. It localises to the cell projection. Its subcellular location is the dendrite. It is found in the axon. The protein resides in the perikaryon. Cell surface receptor that plays a functionally redundant role in the inhibition of neurite outgrowth mediated by MAG. Plays a functionally redundant role in postnatal brain development. Contributes to normal axon migration across the brain midline and normal formation of the corpus callosum. Does not seem to play a significant role in regulating axon regeneration in the adult central nervous system. Protects motoneurons against apoptosis; protection against apoptosis is probably mediated by MAG. Like other family members, plays a role in restricting the number dendritic spines and the number of synapses that are formed during brain development. Signaling mediates activation of Rho and downstream reorganization of the actin cytoskeleton. This Mus musculus (Mouse) protein is Reticulon-4 receptor-like 2.